Consider the following 1055-residue polypeptide: Leukotoxin (1055 aa).

The stretch at 11-49 (QQAAQFANSVADRAKENIDAAKEQLQKALDKLGKTGKKL) forms a coiled coil. 2 cholesterol recognition/amino acid consensus (CRAC) region regions span residues 334-340 (LEEYSKR) and 502-506 (VDYLK). Hemolysin-type calcium-binding repeat units follow at residues 721 to 738 (IGSTLRDKFYGSKFNDVF), 739 to 756 (HGHDGDDLIYGYDGDDRL), 757 to 774 (YGDNGNDEIHGGQGNDKL), 775 to 792 (YGGAGNDRLFGEYGNNYL), 793 to 810 (DGGEGDDHLEGGNGSDIL), 811 to 828 (RGGSGNDKLFGNQGDDLL), and 829 to 846 (DGGEGDDQLAGGEGNDIY). Residues 795–815 (GEGDDHLEGGNGSDILRGGSG) form a disordered region. Positions 990–1009 (KGKSSSLMSSSRSSSMLTQK) are disordered. The segment covering 993-1006 (SSSLMSSSRSSSML) has biased composition (low complexity).

It belongs to the RTX prokaryotic toxin (TC 1.C.11) family. Interacts specifically with the superoxide dismutase [Cu-Zn]. This interaction may protect LtxA from reactive oxygen species and reactive nitrogen species produced by host inflammatory cells during disease. Interacts with the human leukocyte adhesion glycoprotein LFA-1 (ITGAL-ITGB2). In terms of processing, acylated at Lys-562 and Lys-687 by LtxC. This modification is required for full activity. Isolated methyl esters contain palmitoyl and palmitolyl fatty acyl groups with smaller quantities of myristic and stearic fatty acids.

The protein localises to the cell outer membrane. Its subcellular location is the secreted. Its function is as follows. Virulence factor that plays an important role in immune evasion. Lyses human lymphocytes and monocytes. Binds to the LFA-1 integrin on the surface of the host cell and to cholesterol-containing membranes, which probably results in large LtxA-LFA-1 clusters in lipid rafts. Also shows beta-hemolytic activity on certain types of growth media. In Aggregatibacter actinomycetemcomitans (Actinobacillus actinomycetemcomitans), this protein is Leukotoxin.